A 2161-amino-acid chain; its full sequence is DNA polymerase epsilon catalytic subunit A (2161 aa).

Short sequence motifs (nuclear localization signal) lie at residues 5–12, 1137–1144, and 1239–1246; these read NRRRDRKD, HKKVREKD, and LKKRKWKV. 4 residues coordinate Zn(2+): Cys-2038, Cys-2041, Cys-2063, and Cys-2068. The CysA-type zinc finger occupies 2038-2068; that stretch reads CSNCDAYRDLDICRDPALLTEKEWSCADTQC. Residues Cys-2099, Cys-2102, Cys-2114, and Cys-2116 each coordinate [4Fe-4S] cluster. A CysB motif motif is present at residues 2099–2116; that stretch reads CIRCNQVKAAHLTEQCEC. The short motif at 2130–2137 is the Nuclear localization signal 4 element; that stretch reads SKRMEIFM.

Belongs to the DNA polymerase type-B family. Heterotetramer. Subunit of the DNA polymerase II. Interacts (via C-terminus) with DPB2. Interacts with LHP1/TFL2. It depends on [4Fe-4S] cluster as a cofactor. In terms of tissue distribution, mostly expressed at low levels in inflorescence (floral meristem and flowers until anthesis), and, to a lower extent, in roots, seeds and leaves.

The protein resides in the nucleus. It carries out the reaction DNA(n) + a 2'-deoxyribonucleoside 5'-triphosphate = DNA(n+1) + diphosphate. Its function is as follows. DNA polymerase II, which participates in chromosomal DNA replication. Required for the timing and determination of cell fate during plant embryogenesis and root pole development, by promoting cell cycle and cell type patterning. Necessary for proper shoot (SAM) and root apical meristem (RAM) functions. Involved in maintaining epigenetic states, controlling hypersensitive response (HR), and mediating abscisic acid (ABA) signaling. Required for flowering repression through a mechanism involving epigenetic gene silencing. May participate in processes involved in chromatin-mediated cellular memory. This Arabidopsis thaliana (Mouse-ear cress) protein is DNA polymerase epsilon catalytic subunit A (POL2A).